Consider the following 28-residue polypeptide: Aryl acylamidase (28 aa).

In terms of assembly, homodimer.

It carries out the reaction an anilide + H2O = aniline + a carboxylate + H(+). This Nocardia globerula protein is Aryl acylamidase.